We begin with the raw amino-acid sequence, 623 residues long: MPLPFEQFQGKGVLGFLDSSSSPGYKIWANPEKLHGRVEEDLCFVVNNGGFSEPTSVLDSVRSPSPFVSSSTTTLSSSHGGPSGGGAAAATFSGADGKCDQMGFEDLDGVLSGGSPGQEQSIFRLIMAGDVVDPGSEFVGFDIGSGSDPVIDNPNPLFGYGFPFQNAPEEEKFQISINPNPGFFSDPPSSPPAKRLNSGQPGSQHLQWVFPFSDPGHESHDPFLTPPKIAGEDQNDQDQSAVIIDQLFSAAAELTTNGGDNNPVLAQGILARLNHNLNNNNDDTNNNPKPPFHRAASYITEALHSLLQDSSLSPPSLSPPQNLIFRIAAYRAFSETSPFLQFVNFTANQTILESFEGFDRIHIVDFDIGYGGQWASLIQELAGKRNRSSSAPSLKITAFASPSTVSDEFELRFTEENLRSFAGETGVSFEIELLNMEILLNPTYWPLSLFRSSEKEAIAVNLPISSMVSGYLPLILRFLKQISPNVVVCSDRSCDRNNDAPFPNGVINALQYYTSLLESLDSGNLNNAEAATSIERFCVQPSIQKLLTNRYRWMERSPPWRSLFGQCGFTPVTLSQTAETQAEYLLQRNPMRGFHLEKRQSSSPSLVLCWQRKELVTVSAWKC.

Disordered stretches follow at residues 62–90 (RSPS…AAAA) and 179–203 (PNPG…QPGS). Residues 63-80 (SPSPFVSSSTTTLSSSHG) are compositionally biased toward low complexity. The GRAS domain occupies 235 to 622 (NDQDQSAVII…KELVTVSAWK (388 aa)). A leucine repeat I (LRI) region spans residues 242–311 (VIIDQLFSAA…ALHSLLQDSS (70 aa)). Positions 330-398 (YRAFSETSPF…SSAPSLKITA (69 aa)) are VHIID. Residues 361-365 (IHIVD) carry the VHIID motif. Residues 413 to 448 (FTEENLRSFAGETGVSFEIELLNMEILLNPTYWPLS) form a leucine repeat II (LRII) region. The interval 458–545 (IAVNLPISSM…RFCVQPSIQK (88 aa)) is PFYRE. The SAW stretch occupies residues 548–622 (TNRYRWMERS…KELVTVSAWK (75 aa)).

Belongs to the GRAS family. As to expression, expressed in seedlings, roots, leaves and flowers.

It localises to the nucleus. Functionally, probable transcription factor involved in plant development. The polypeptide is Scarecrow-like protein 22 (SCL22) (Arabidopsis thaliana (Mouse-ear cress)).